Consider the following 99-residue polypeptide: DNA-binding protein Fis (99 aa).

The H-T-H motif DNA-binding region spans Gln-75–Lys-94.

This sequence belongs to the transcriptional regulatory Fis family. Homodimer.

In terms of biological role, activates ribosomal RNA transcription. Plays a direct role in upstream activation of rRNA promoters. This is DNA-binding protein Fis from Tolumonas auensis (strain DSM 9187 / NBRC 110442 / TA 4).